The primary structure comprises 347 residues: MAREWPMEQSPTLQAHLALQNADADCAAVIEALADAARELARQIAIAPLAGFDEGAATVNADGDVQKALDIVADNLMRDALRKAPVAGILSEEVDRPETVNAAAPLCVAIDPLDGSSNLQNNISVGTIFSIRPRGRDVLSSFFEPGTAQRAAGFFVYGPQTCLVLAIDHRVDLYVLHPTLREFVLARSGLRIPQDTPEFAINASNRRHWSGTVRNYVDECLAGAAGPRGRDFNMRWIASLVAEAYRILMRGGVFLYPADSRPGYREGRLRLVYEAHPMALIMEWAGGSASSGRSRILELSARSPHQRAPLIMGDVRLVRDVDQLHEGVEPLFETSDAPLFARRGLFR.

4 residues coordinate Mg(2+): glutamate 92, aspartate 111, leucine 113, and aspartate 114. Residues 114 to 117 and asparagine 202 each bind substrate; that span reads DGSS. Glutamate 274 is a Mg(2+) binding site.

It belongs to the FBPase class 1 family. Homotetramer. Mg(2+) serves as cofactor.

The protein resides in the cytoplasm. The catalysed reaction is beta-D-fructose 1,6-bisphosphate + H2O = beta-D-fructose 6-phosphate + phosphate. It participates in carbohydrate biosynthesis; Calvin cycle. The polypeptide is Fructose-1,6-bisphosphatase class 1 2 (Bradyrhizobium sp. (strain BTAi1 / ATCC BAA-1182)).